The following is a 172-amino-acid chain: Adenine phosphoribosyltransferase (172 aa).

It belongs to the purine/pyrimidine phosphoribosyltransferase family. Homodimer.

Its subcellular location is the cytoplasm. It carries out the reaction AMP + diphosphate = 5-phospho-alpha-D-ribose 1-diphosphate + adenine. It participates in purine metabolism; AMP biosynthesis via salvage pathway; AMP from adenine: step 1/1. Its function is as follows. Catalyzes a salvage reaction resulting in the formation of AMP, that is energically less costly than de novo synthesis. The polypeptide is Adenine phosphoribosyltransferase (Crocosphaera subtropica (strain ATCC 51142 / BH68) (Cyanothece sp. (strain ATCC 51142))).